Consider the following 70-residue polypeptide: Small, acid-soluble spore protein I (70 aa).

This sequence belongs to the SspI family.

Its subcellular location is the spore core. The protein is Small, acid-soluble spore protein I of Bacillus licheniformis (strain ATCC 14580 / DSM 13 / JCM 2505 / CCUG 7422 / NBRC 12200 / NCIMB 9375 / NCTC 10341 / NRRL NRS-1264 / Gibson 46).